Reading from the N-terminus, the 379-residue chain is MKHLALIGSTGSIGRQVLQVVRSIPDTFIIETLAAYGRNQEALISQIREFNPRVVAVREETTYKELRKLFPHIEILLGEEGLVSVATEPSVTITIVASSGIDALPAVIAAIRQKKTIALANKESLVAAGELVTTLARENGVQILPIDSEHNALFQCLEGRDSSTIKKLLLTASGGPLRNKSKEELQKVSLQEVLRHPVWNMGPKITVDSSTLVNKGLEIIEAFWLFGLEAVEIEAVIHPQSLVHGMVEFCDGTILSVMKPPSMLFPIQHVLTFPERSPAIGPGFDFLSNRTLEFFPIDEDRFPSVHLAKRVLLEKGSMGCFFNGANEALVHRFLAGEISWHQIVPKLQALVDQHRVQSCLSLEEILSVDAEARARAQEC.

The NADPH site is built by Thr10, Gly11, Ser12, Ile13, Arg38, Asn39, and Asn121. Lys122 is a binding site for 1-deoxy-D-xylulose 5-phosphate. Residue Glu123 coordinates NADPH. Residue Asp147 participates in Mn(2+) binding. Ser148, Glu149, Ser173, and His196 together coordinate 1-deoxy-D-xylulose 5-phosphate. Position 149 (Glu149) interacts with Mn(2+). Gly202 contributes to the NADPH binding site. 1-deoxy-D-xylulose 5-phosphate contacts are provided by Ser209, Asn214, Lys215, and Glu218. Glu218 lines the Mn(2+) pocket.

It belongs to the DXR family. Mg(2+) is required as a cofactor. It depends on Mn(2+) as a cofactor.

The enzyme catalyses 2-C-methyl-D-erythritol 4-phosphate + NADP(+) = 1-deoxy-D-xylulose 5-phosphate + NADPH + H(+). It functions in the pathway isoprenoid biosynthesis; isopentenyl diphosphate biosynthesis via DXP pathway; isopentenyl diphosphate from 1-deoxy-D-xylulose 5-phosphate: step 1/6. Functionally, catalyzes the NADPH-dependent rearrangement and reduction of 1-deoxy-D-xylulose-5-phosphate (DXP) to 2-C-methyl-D-erythritol 4-phosphate (MEP). The chain is 1-deoxy-D-xylulose 5-phosphate reductoisomerase from Chlamydia trachomatis serovar L2 (strain ATCC VR-902B / DSM 19102 / 434/Bu).